The chain runs to 318 residues: Probable mitochondrial 2-oxoglutarate/malate carrier protein (318 aa).

Solcar repeat units follow at residues 22 to 111, 119 to 210, and 219 to 309; these read QSQL…IKDI, LPFT…TKQL, and DDIK…LNIL. The next 6 membrane-spanning stretches (helical) occupy residues 28-48, 79-99, 125-145, 185-205, 225-245, and 281-301; these read FVIG…IDSL, GFFT…TYTT, IMVG…ADLT, GCSP…SSYD, LIAS…LDVI, and FYKG…LTFI.

Belongs to the mitochondrial carrier (TC 2.A.29) family.

It localises to the mitochondrion inner membrane. In terms of biological role, mitochondrial solute carriers shuttle metabolites, nucleotides, and cofactors through the mitochondrial inner membrane. Catalyzes the transport of 2-oxoglutarate across the inner mitochondrial membrane in an electroneutral exchange for malate or other dicarboxylic acids, and plays an important role in several metabolic processes, including the malate-aspartate shuttle, the oxoglutarate/isocitrate shuttle, in gluconeogenesis from lactate, and in nitrogen metabolism. The polypeptide is Probable mitochondrial 2-oxoglutarate/malate carrier protein (ucpC) (Dictyostelium discoideum (Social amoeba)).